The primary structure comprises 272 residues: Undecaprenyl-diphosphatase (272 aa).

8 helical membrane passes run 5–25, 45–65, 88–108, 115–135, 152–171, 189–209, 221–241, and 251–271; these read YSLFVAFVLGVVEGLTEFLPV, AKTFEVIIQLGSILAVVVVFW, HLTLGHILLAMIPAVGLGLAF, LFNPQSVMYALVAGGLLLLAA, TYRQAFAIGCFQCLALWPGF, YAASEFSFILAVPMMLGASGL, GDLPMFAVGFITAFVVALIAI, and ISFVPFAIYRFIVAAAVYWVF.

Belongs to the UppP family.

The protein localises to the cell inner membrane. The catalysed reaction is di-trans,octa-cis-undecaprenyl diphosphate + H2O = di-trans,octa-cis-undecaprenyl phosphate + phosphate + H(+). Its function is as follows. Catalyzes the dephosphorylation of undecaprenyl diphosphate (UPP). Confers resistance to bacitracin. In Yersinia enterocolitica serotype O:8 / biotype 1B (strain NCTC 13174 / 8081), this protein is Undecaprenyl-diphosphatase.